A 96-amino-acid polypeptide reads, in one-letter code: Probable quinol oxidase subunit 4 (96 aa).

3 consecutive transmembrane segments (helical) span residues 8-28 (TVGFIASIVLTLLAVYVTLYT), 36-56 (LTIIFGFAFVQAGLQLLMFMH), and 68-88 (FKVIFALVITLCFVVGTYWVM).

It belongs to the cytochrome c oxidase bacterial subunit 4 family.

It localises to the cell membrane. It catalyses the reaction 2 a quinol + O2 = 2 a quinone + 2 H2O. In terms of biological role, catalyzes quinol oxidation with the concomitant reduction of oxygen to water. This chain is Probable quinol oxidase subunit 4 (qoxD), found in Staphylococcus aureus (strain USA300).